Here is a 160-residue protein sequence, read N- to C-terminus: Snaclec subunit A (160 aa).

A signal peptide spans 1-23; it reads MGRFILVNLGLLVVAFSLRGSEA. 3 disulfide bridges follow: C25-C36, C53-C150, and C125-C142. Positions 32–151 constitute a C-type lectin domain; the sequence is YDKYCYKVFD…CDFTLPFICK (120 aa).

The protein belongs to the snaclec family. In terms of assembly, heterodimer of subunits A and B; disulfide-linked. In terms of tissue distribution, expressed by the venom gland.

It is found in the secreted. Its function is as follows. Interferes with one step of hemostasis (modulation of platelet aggregation, or coagulation cascade, for example). This Philodryas olfersii (Green snake) protein is Snaclec subunit A.